The following is a 365-amino-acid chain: Phenoloxidase-activating factor 1 (365 aa).

Residues 1–23 form the signal peptide; sequence MKQVHFFILWFFVLNLYSIKAQA. One can recognise a Clip domain in the interval 24 to 74; it reads GCRTPNGENARCVPINNCKILYDSVLTSDPEVIRFLRASQCGYNGQPLVCC. 8 disulfide bridges follow: C25-C73, C35-C64, C41-C74, C101-C240, C140-C156, C184-C191, C284-C301, and C311-C340. Residues 110–364 enclose the Peptidase S1 domain; sequence ILNGDDTVPE…YRDWIEGNIR (255 aa). Residue N131 is glycosylated (N-linked (GlcNAc...) asparagine). H155 serves as the catalytic Charge relay system. Positions 175, 177, 180, and 183 each coordinate Ca(2+). Catalysis depends on D220, which acts as the Charge relay system. S315 functions as the Charge relay system in the catalytic mechanism.

It belongs to the peptidase S1 family. CLIP subfamily. As to quaternary structure, in the active form, heterodimer of a light chain and a heavy chain; disulfide-linked. Cleaved following the recognition of pathogen-derived products, probably by a lysyl endopeptidase.

The protein resides in the secreted. Protein stability and endopeptidase activity are calcium dependent. First cleavage on prophenoloxidase PPO1 and PPO2 is not dependent on calcium; however, cleavage of PPO1 and PPO2 to their active forms is dependent on calcium and on the presence of PPAF2 and PPAF3. Cleavage of PPAF2 is inhibited by calcium. Inhibited by ethylenediaminetetraacetic acid (EDTA), p-nitrophenyl-p'-guanido-benzoate, diisopropylphosphorofluoridate (iPr2PF) and p-(Amidinophenyl)methanesulfonyl fluoride (p-APMSF). Functionally, serine endopeptidase which, by cleaving prophenoloxidase PPO1 and PPO2, is required for the activation of the prophenoloxidase cascade probably following the recognition of pathogen-derived products. The chain is Phenoloxidase-activating factor 1 from Holotrichia diomphalia (Korean black chafer).